Consider the following 392-residue polypeptide: Phosphopentomutase (392 aa).

Positions 14, 286, 291, 327, 328, and 339 each coordinate Mn(2+).

Belongs to the phosphopentomutase family. Requires Mn(2+) as cofactor.

Its subcellular location is the cytoplasm. It catalyses the reaction 2-deoxy-alpha-D-ribose 1-phosphate = 2-deoxy-D-ribose 5-phosphate. It carries out the reaction alpha-D-ribose 1-phosphate = D-ribose 5-phosphate. It participates in carbohydrate degradation; 2-deoxy-D-ribose 1-phosphate degradation; D-glyceraldehyde 3-phosphate and acetaldehyde from 2-deoxy-alpha-D-ribose 1-phosphate: step 1/2. Functionally, isomerase that catalyzes the conversion of deoxy-ribose 1-phosphate (dRib-1-P) and ribose 1-phosphate (Rib-1-P) to deoxy-ribose 5-phosphate (dRib-5-P) and ribose 5-phosphate (Rib-5-P), respectively. The polypeptide is Phosphopentomutase (Staphylococcus aureus (strain Mu3 / ATCC 700698)).